The primary structure comprises 576 residues: Sulfite reductase [NADPH] hemoprotein beta-component (576 aa).

Residues C435, C441, C480, and C484 each coordinate [4Fe-4S] cluster. C484 serves as a coordination point for siroheme.

This sequence belongs to the nitrite and sulfite reductase 4Fe-4S domain family. In terms of assembly, alpha(8)-beta(8). The alpha component is a flavoprotein, the beta component is a hemoprotein. It depends on siroheme as a cofactor. The cofactor is [4Fe-4S] cluster.

It carries out the reaction hydrogen sulfide + 3 NADP(+) + 3 H2O = sulfite + 3 NADPH + 4 H(+). The protein operates within sulfur metabolism; hydrogen sulfide biosynthesis; hydrogen sulfide from sulfite (NADPH route): step 1/1. Functionally, component of the sulfite reductase complex that catalyzes the 6-electron reduction of sulfite to sulfide. This is one of several activities required for the biosynthesis of L-cysteine from sulfate. The chain is Sulfite reductase [NADPH] hemoprotein beta-component from Yersinia pseudotuberculosis serotype IB (strain PB1/+).